The chain runs to 307 residues: Methionyl-tRNA formyltransferase (307 aa).

Residue 108 to 111 coordinates (6S)-5,6,7,8-tetrahydrofolate; it reads SLLP.

The protein belongs to the Fmt family.

The catalysed reaction is L-methionyl-tRNA(fMet) + (6R)-10-formyltetrahydrofolate = N-formyl-L-methionyl-tRNA(fMet) + (6S)-5,6,7,8-tetrahydrofolate + H(+). Functionally, attaches a formyl group to the free amino group of methionyl-tRNA(fMet). The formyl group appears to play a dual role in the initiator identity of N-formylmethionyl-tRNA by promoting its recognition by IF2 and preventing the misappropriation of this tRNA by the elongation apparatus. This chain is Methionyl-tRNA formyltransferase, found in Xanthomonas euvesicatoria pv. vesicatoria (strain 85-10) (Xanthomonas campestris pv. vesicatoria).